The following is a 255-amino-acid chain: Diphthine synthase (255 aa).

S-adenosyl-L-methionine contacts are provided by residues L9, D85, V88, 113-114, L164, A207, and H232; that span reads SI.

Belongs to the diphthine synthase family. In terms of assembly, homodimer.

It catalyses the reaction 2-[(3S)-amino-3-carboxypropyl]-L-histidyl-[translation elongation factor 2] + 3 S-adenosyl-L-methionine = diphthine-[translation elongation factor 2] + 3 S-adenosyl-L-homocysteine + 3 H(+). The protein operates within protein modification; peptidyl-diphthamide biosynthesis. Its function is as follows. S-adenosyl-L-methionine-dependent methyltransferase that catalyzes the trimethylation of the amino group of the modified target histidine residue in translation elongation factor 2 (EF-2), to form an intermediate called diphthine. The three successive methylation reactions represent the second step of diphthamide biosynthesis. The protein is Diphthine synthase of Methanococcus maripaludis (strain C7 / ATCC BAA-1331).